Here is a 313-residue protein sequence, read N- to C-terminus: tRNA dimethylallyltransferase 2 (313 aa).

16–23 (GPTASGKT) contacts ATP. A substrate-binding site is contributed by 18 to 23 (TASGKT). Interaction with substrate tRNA regions lie at residues 41-44 (DSRQ) and 161-165 (QRTIR).

This sequence belongs to the IPP transferase family. In terms of assembly, monomer. It depends on Mg(2+) as a cofactor.

It carries out the reaction adenosine(37) in tRNA + dimethylallyl diphosphate = N(6)-dimethylallyladenosine(37) in tRNA + diphosphate. In terms of biological role, catalyzes the transfer of a dimethylallyl group onto the adenine at position 37 in tRNAs that read codons beginning with uridine, leading to the formation of N6-(dimethylallyl)adenosine (i(6)A). This is tRNA dimethylallyltransferase 2 from Pelobacter propionicus (strain DSM 2379 / NBRC 103807 / OttBd1).